The following is a 214-amino-acid chain: MDQKFYISSLLQEDTPSKEKPETSSESPIPTGSECSLNESSDTTLDQKMEPNKKMFNGTLDFNPWICHVSQQLAAQLSQNGKNRPGAPNQVPLLNMNVNQTMGNMWDPRLSWLYPYMSKSPQKRKGGQIRFTNEQTDALEHKFDSHKYLSPQERKKLAKSLSLSERQVKTWFQNRRAKWRRVRKDGEDEDEMPNGASARSLGQLQSSNPFLSHG.

2 disordered regions span residues 1-50 (MDQK…QKME) and 180-214 (RRVR…LSHG). The segment covering 24-34 (SSESPIPTGSE) has biased composition (low complexity). Over residues 35 to 44 (CSLNESSDTT) the composition is skewed to polar residues. The segment at residues 124 to 183 (RKGGQIRFTNEQTDALEHKFDSHKYLSPQERKKLAKSLSLSERQVKTWFQNRRAKWRRVR) is a DNA-binding region (homeobox). A compositionally biased stretch (polar residues) spans 200–214 (SLGQLQSSNPFLSHG).

It is found in the nucleus. Functionally, transcriptional repressor. Involved in pharyngeal development and required for the formation of the pharyngeal isthmus. Plays a role in modulating cytoskeleton in the muscle cells of the isthmus. Regulates expression of the acetylcholinesterase genes ace-1 and ace-2. May regulate its own expression. The polypeptide is Homeobox protein HEX homolog pha-2 (Caenorhabditis elegans).